Reading from the N-terminus, the 372-residue chain is Coxsackievirus and adenovirus receptor homolog (372 aa).

Positions 1–22 (MDMRTSFLCVTYVILLTGSACG) are cleaved as a signal peptide. Ig-like C2-type domains lie at 23–140 (LQIT…YLLT) and 130–234 (PGIA…VTIT). The Extracellular portion of the chain corresponds to 23–241 (LQITSTGQTS…TITQPPNTAG (219 aa)). 3 disulfides stabilise this stretch: C45–C124, C150–C227, and C166–C216. An N-linked (GlcNAc...) asparagine glycan is attached at N205. Residues 242 to 262 (IIAGVIICILLLLILLALILF) form a helical membrane-spanning segment. At 263-372 (CCCRARHKKK…PAQNKDGSIV (110 aa)) the chain is on the cytoplasmic side. The segment at 286-352 (PPPKSRVSTA…PPSRMAGPNL (67 aa)) is disordered. A compositionally biased stretch (polar residues) spans 291–317 (RVSTARSFTSVGSQRSSLGSMSPSNLH). A compositionally biased stretch (basic and acidic residues) spans 318–336 (EYSKPQYDKIPSEEYDRPP).

In terms of assembly, monomer. Probably homodimer formed by 2 molecules on adjacent cells.

It localises to the cell membrane. Its subcellular location is the basolateral cell membrane. It is found in the cell junction. The protein localises to the tight junction. The protein resides in the adherens junction. Functionally, may function as a homophilic cell adhesion molecule and be essential for tight junction integrity. May also be involved in transepithelial migration of leukocytes through adhesive interactions with jaml. The interaction between both receptors may also mediate the activation of gamma-delta T-cells, a subpopulation of T-cells residing in epithelia and involved in tissue homeostasis and repair. The sequence is that of Coxsackievirus and adenovirus receptor homolog (cxadr) from Danio rerio (Zebrafish).